A 52-amino-acid chain; its full sequence is Protein YabQ (52 aa).

Its function is as follows. Identified as a multicopy suppressor of the slow growth phenotype of an rsgA (yjeQ) deletion mutant. This Escherichia coli (strain K12) protein is Protein YabQ (yabQ).